A 445-amino-acid polypeptide reads, in one-letter code: Tyrosine--tRNA ligase, mitochondrial (445 aa).

Residue Y33 coordinates L-tyrosine. D37 is an ATP binding site. The short motif at 38 to 47 (PTAASLHVGN) is the 'HIGH' region element. Positions 77, 184, 188, 191, and 210 each coordinate L-tyrosine. Positions 245-249 (KLGKS) match the 'KMSKS' region motif. Position 248 (K248) interacts with ATP. One can recognise an S4 RNA-binding domain in the interval 384–445 (QPFSRLLRTL…GKRTFVLDSL (62 aa)).

This sequence belongs to the class-I aminoacyl-tRNA synthetase family. Homodimer.

It localises to the mitochondrion matrix. The enzyme catalyses tRNA(Tyr) + L-tyrosine + ATP = L-tyrosyl-tRNA(Tyr) + AMP + diphosphate + H(+). Catalyzes the attachment of tyrosine to tRNA(Tyr) in a two-step reaction: tyrosine is first activated by ATP to form Tyr-AMP and then transferred to the acceptor end of tRNA(Tyr). In Schizosaccharomyces pombe (strain 972 / ATCC 24843) (Fission yeast), this protein is Tyrosine--tRNA ligase, mitochondrial.